Here is a 187-residue protein sequence, read N- to C-terminus: Elongation factor P (187 aa).

The protein belongs to the elongation factor P family.

It localises to the cytoplasm. It functions in the pathway protein biosynthesis; polypeptide chain elongation. Involved in peptide bond synthesis. Stimulates efficient translation and peptide-bond synthesis on native or reconstituted 70S ribosomes in vitro. Probably functions indirectly by altering the affinity of the ribosome for aminoacyl-tRNA, thus increasing their reactivity as acceptors for peptidyl transferase. In Mycolicibacterium smegmatis (strain ATCC 700084 / mc(2)155) (Mycobacterium smegmatis), this protein is Elongation factor P.